The sequence spans 1119 residues: MLQQYTLLLIYLSVATAKTITGVFNSFNSLTWSNAATYNYKGPGTPTWNAVLGWSLDGTSASPGDTFTLNMPCVFKFTTSQTSVDLTAHGVKYATCQFQAGEEFMTFSTLTCTVSNTLTPSIKALGTVTLPLAFNVGGTGSSVDLEDSKCFTAGTNTVTFNDGGKKISINVDFERSNVDPKGYLTDSRVIPSLNKVSTLFVAPQCANGYTSGTMGFANTYGDVQIDCSNIHVGITKGLNDWNYPVSSESFSYTKTCSSNGIFITYKNVPAGYRPFVDAYISATDVNSYTLSYANEYTCAGGYWQRAPFTLRWTGYRNSDAGSNGIVIVATTRTVTDSTTAVTTLPFDPNRDKTKTIEILKPIPTTTITTSYVGVTTSYSTKTAPIGETATVIVDIPYHTTTTVTSKWTGTITSTTTHTNPTDSIDTVIVQVPSPNPTVTTTEYWSQSFATTTTITGPPGNTDTVLIREPPNHTVTTTEYWSESYTTTSTFTAPPGGTDSVIIKEPPNPTVTTTEYWSESYTTTSTFTAPPGGTDSVIIKEPPNHTVTTTEYWSQSYTTTTTVTAPPGGTDTVLVREPPNHTVTTTEYWSQSYTTTTTVIAPPGGTDSVIIREPPNPTVTTTEYWSQSYATTTTITAPPGETDTVLIREPPNHTVTTTEYWSQSYATTTTITAPPGETDTVLIREPPNHTVTTTEYWSQSFATTTTVTAPPGGTDTVIIREPPNHTVTTTEYWSQSYATTTTITAPPGETDTVLIREPPNHTVTTTEYWSQSYATTTTIIAPPGETDTVLIREPPNPTVTTTEYWSQSYTTATTVTAPPGGTDTVIIYDTMSSSEISSFSRPHYTNHTTLWSTTWVIETKTITETSCEGDKGCSWVSVSTRIVTIPNNIETPMVTNTVDSTTTESTSQSPSGIFSESGVSVETESSTVTTAQTNPSVPTTESEVVFTTKGNNENGPYESPSTNVKSSMDENSEFTTSTAASTSTDIENETIATTGSVEASSPIISSSADETTTVTTTAESTSVIEQPTNNNGGGKAPSATSSPSTTTTANNDSVITGTTSTNQSQSQSQYNSDTQQTTLSQQMTSSLVSLHMLTTFDGSGSVIQHSTWLCGLITLLSLFI.

An N-terminal signal peptide occupies residues 1–17 (MLQQYTLLLIYLSVATA). Cystine bridges form between Cys-73–Cys-150, Cys-96–Cys-112, Cys-205–Cys-298, and Cys-227–Cys-256. ALS repeat units lie at residues 365–396 (TTIT…VDIP), 401–432 (TTVT…VQVP), and 438–469 (VTTT…IREP). Asn-471 carries an N-linked (GlcNAc...) asparagine glycan. ALS repeat units follow at residues 474-505 (VTTT…IKEP) and 510-541 (VTTT…IKEP). Asn-543 is a glycosylation site (N-linked (GlcNAc...) asparagine). The ALS 6 repeat unit spans residues 546-577 (VTTTEYWSQSYTTTTTVTAPPGGTDTVLVREP). An N-linked (GlcNAc...) asparagine glycan is attached at Asn-579. ALS repeat units follow at residues 582–613 (VTTT…IREP) and 618–649 (VTTT…IREP). Asn-651 carries an N-linked (GlcNAc...) asparagine glycan. The stretch at 654–685 (VTTTEYWSQSYATTTTITAPPGETDTVLIREP) is one ALS 9 repeat. Asn-687 carries an N-linked (GlcNAc...) asparagine glycan. The stretch at 690–721 (VTTTEYWSQSFATTTTVTAPPGGTDTVIIREP) is one ALS 10 repeat. N-linked (GlcNAc...) asparagine glycosylation occurs at Asn-723. One copy of the ALS 11 repeat lies at 726–757 (VTTTEYWSQSYATTTTITAPPGETDTVLIREP). Asn-759 is a glycosylation site (N-linked (GlcNAc...) asparagine). 2 ALS repeats span residues 762–793 (VTTT…IREP) and 798–827 (VTTT…VIIY). The N-linked (GlcNAc...) asparagine glycan is linked to Asn-845. Residues 892–1077 (MVTNTVDSTT…QYNSDTQQTT (186 aa)) are disordered. Positions 894 to 929 (TNTVDSTTTESTSQSPSGIFSESGVSVETESSTVTT) are enriched in low complexity. Composition is skewed to polar residues over residues 930–941 (AQTNPSVPTTES) and 947–965 (TKGN…NVKS). Over residues 974-983 (TTSTAASTST) the composition is skewed to low complexity. An N-linked (GlcNAc...) asparagine glycan is attached at Asn-987. 2 stretches are compositionally biased toward low complexity: residues 998–1022 (ASSP…STSV) and 1035–1048 (APSA…TTTA). Residues Asn-1050 and Asn-1061 are each glycosylated (N-linked (GlcNAc...) asparagine). Positions 1057 to 1077 (TTSTNQSQSQSQYNSDTQQTT) are enriched in low complexity. A lipid anchor (GPI-anchor amidated serine) is attached at Ser-1098. A propeptide spans 1099-1119 (GSVIQHSTWLCGLITLLSLFI) (removed in mature form).

Belongs to the ALS family. Post-translationally, the GPI-anchor is attached to the protein in the endoplasmic reticulum and serves to target the protein to the cell surface. There, the glucosamine-inositol phospholipid moiety is cleaved off and the GPI-modified mannoprotein is covalently attached via its lipidless GPI glycan remnant to the 1,6-beta-glucan of the outer cell wall layer.

The protein localises to the cell membrane. It is found in the secreted. It localises to the cell wall. Cell surface adhesion protein which mediates both yeast-to-host tissue adherence and yeast aggregation. Plays an important role in the biofilm formation and pathogenesis of C.albicans infections. Necessary for C.albicans to bind to N-cadherin on endothelial cells and E-cadherin on oral epithelial cells and subsequent endocytosis by these cells. During disseminated infection, mediates initial trafficking to the brain and renal cortex and contributes to fungal persistence in the kidneys. This chain is Agglutinin-like protein 3 (ALS3), found in Candida albicans (Yeast).